The following is a 61-amino-acid chain: Tryptophyllin-T1 (61 aa).

The N-terminal stretch at 1–22 (MDFLKKSLFLVLFLGLVSISLC) is a signal peptide. A propeptide spanning residues 23 to 53 (DEEKRQDDDEASEREEKKEIHEEGNQEERRD) is cleaved from the precursor. The interval 25 to 61 (EKRQDDDEASEREEKKEIHEEGNQEERRDRPPSWIPK) is disordered. The segment covering 36–55 (REEKKEIHEEGNQEERRDRP) has biased composition (basic and acidic residues). Pro56 bears the 4-hydroxyproline; partial mark.

It belongs to the frog skin active peptide (FSAP) family. Tryptophillin subfamily. As to expression, expressed by the skin glands.

The protein resides in the secreted. This chain is Tryptophyllin-T1, found in Pithecopus azureus (Orange-legged monkey tree frog).